The following is a 352-amino-acid chain: Ion-translocating oxidoreductase complex subunit D (352 aa).

A run of 4 helical transmembrane segments spans residues 20–40 (IMLL…WFFG), 42–62 (GTLV…ALVL), 89–109 (IPPL…VIIA), and 123–143 (PAMI…TSWL). Thr187 is modified (FMN phosphoryl threonine). 5 helical membrane passes run 214 to 234 (ILAG…GVWL), 242 to 262 (WHIP…GWLF), 267 to 287 (LAAP…FFIL), 301 to 321 (LIFG…GGYP), and 322 to 342 (DGVA…DYYT).

Belongs to the NqrB/RnfD family. The complex is composed of six subunits: RsxA, RsxB, RsxC, RsxD, RsxE and RsxG. It depends on FMN as a cofactor.

It localises to the cell inner membrane. Its function is as follows. Part of a membrane-bound complex that couples electron transfer with translocation of ions across the membrane. Required to maintain the reduced state of SoxR. The chain is Ion-translocating oxidoreductase complex subunit D from Escherichia coli O81 (strain ED1a).